Reading from the N-terminus, the 545-residue chain is T-complex protein 1 subunit alpha (545 aa).

This sequence belongs to the TCP-1 chaperonin family. Heterooligomeric complex of about 850 to 900 kDa that forms two stacked rings, 12 to 16 nm in diameter.

The protein localises to the cytoplasm. Its function is as follows. Molecular chaperone; assists the folding of proteins upon ATP hydrolysis. Known to play a role, in vitro, in the folding of actin and tubulin. The protein is T-complex protein 1 subunit alpha (TCP-1A) of Schistosoma mansoni (Blood fluke).